Reading from the N-terminus, the 338-residue chain is Cytochrome c biogenesis protein CcsA (338 aa).

Helical transmembrane passes span 11-31, 39-59, 76-96, 100-120, 145-165, 244-264, 278-295, and 305-325; these read VLLD…YWLA, LLHE…TGLL, ESLF…EAFA, LVGV…SLTL, VMIL…AFLI, LIGL…VWAN, TWSL…HARI, and ATLA…VNFL.

Belongs to the CcmF/CycK/Ccl1/NrfE/CcsA family. As to quaternary structure, may interact with ccs1.

The protein resides in the cell inner membrane. Required during biogenesis of c-type cytochromes (cytochrome c6 and cytochrome f) at the step of heme attachment. The protein is Cytochrome c biogenesis protein CcsA of Gloeobacter violaceus (strain ATCC 29082 / PCC 7421).